We begin with the raw amino-acid sequence, 407 residues long: Carbamoyl phosphate synthase small chain (407 aa).

The CPSase stretch occupies residues 1–205 (MTETTPKTAP…LQDGYGEQDA (205 aa)). Residues S60, G257, and G259 each contribute to the L-glutamine site. The region spanning 209–397 (HVVALDFGVK…INLIRERKGQ (189 aa)) is the Glutamine amidotransferase type-1 domain. C286 (nucleophile) is an active-site residue. L-glutamine-binding residues include L287, Q290, N328, G330, and F331. Residues H370 and E372 contribute to the active site.

Belongs to the CarA family. In terms of assembly, composed of two chains; the small (or glutamine) chain promotes the hydrolysis of glutamine to ammonia, which is used by the large (or ammonia) chain to synthesize carbamoyl phosphate. Tetramer of heterodimers (alpha,beta)4.

The catalysed reaction is hydrogencarbonate + L-glutamine + 2 ATP + H2O = carbamoyl phosphate + L-glutamate + 2 ADP + phosphate + 2 H(+). The enzyme catalyses L-glutamine + H2O = L-glutamate + NH4(+). It functions in the pathway amino-acid biosynthesis; L-arginine biosynthesis; carbamoyl phosphate from bicarbonate: step 1/1. The protein operates within pyrimidine metabolism; UMP biosynthesis via de novo pathway; (S)-dihydroorotate from bicarbonate: step 1/3. In terms of biological role, small subunit of the glutamine-dependent carbamoyl phosphate synthetase (CPSase). CPSase catalyzes the formation of carbamoyl phosphate from the ammonia moiety of glutamine, carbonate, and phosphate donated by ATP, constituting the first step of 2 biosynthetic pathways, one leading to arginine and/or urea and the other to pyrimidine nucleotides. The small subunit (glutamine amidotransferase) binds and cleaves glutamine to supply the large subunit with the substrate ammonia. This is Carbamoyl phosphate synthase small chain from Brucella abortus (strain S19).